The primary structure comprises 174 residues: Small heat shock protein OV25-1 (174 aa).

The region spanning 50 to 161 (LNECNIGNTL…ASRNIPIRAS (112 aa)) is the sHSP domain. Residues 153–174 (SRNIPIRASPKEPEAKQKTKKQ) form a disordered region. The segment covering 161–174 (SPKEPEAKQKTKKQ) has biased composition (basic and acidic residues).

Belongs to the small heat shock protein (HSP20) family.

This is Small heat shock protein OV25-1 (OV25-1) from Onchocerca volvulus.